The sequence spans 1135 residues: Retinoblastoma-like protein 2 (1135 aa).

Residues 1–43 form a disordered region; it reads MASGGNQSSPPPPAAAASSEEEEEDGDTADRAQPAGSPSHQIQ. Residue Ser-410 is modified to Phosphoserine. Thr-414 is subject to Phosphothreonine. The interval 414–613 is domain A; sequence TPVSTATHSL…DRIRDNENRV (200 aa). A pocket; binds E1A region spans residues 414 to 1021; it reads TPVSTATHSL…QTFAMKYSQA (608 aa). O-linked (GlcNAc) serine glycosylation occurs at Ser-417. The tract at residues 614–824 is spacer; that stretch reads PTCEEVTPPH…QGQPLTSSSI (211 aa). Residue Ser-636 is modified to Phosphoserine. Position 639 is a phosphothreonine (Thr-639). Disordered stretches follow at residues 649-698, 806-825, and 932-995; these read DAGG…PPQP, ISPG…SSIR, and RRNS…EEEE. Residues 656-674 are compositionally biased toward polar residues; the sequence is SVTSPTTLYDRYSSPTVST. 3 positions are modified to phosphoserine: Ser-659, Ser-669, and Ser-684. Over residues 806–818 the composition is skewed to low complexity; the sequence is ISPGGQQQNQGQP. Residues 825 to 1021 are domain B; sequence RPRKTSSLSL…QTFAMKYSQA (197 aa). Composition is skewed to polar residues over residues 935–950 and 958–969; these read SGSC…PTEL and DSSPVMRSNSTL. 5 positions are modified to phosphoserine: Ser-942, Ser-946, Ser-960, Ser-965, and Ser-967. Thr-968 carries the phosphothreonine modification. Residues 971–981 show a composition bias toward pro residues; sequence VPQPSSAPPTP. Phosphoserine is present on residues Ser-975 and Ser-976. Residue Thr-980 is modified to Phosphothreonine. 4 positions are modified to phosphoserine: Ser-1031, Ser-1064, Ser-1076, and Ser-1108.

It belongs to the retinoblastoma protein (RB) family. Interacts with AATF, KMT5B and KMT5C. Component of the DREAM complex (also named LINC complex) at least composed of E2F4, E2F5, LIN9, LIN37, LIN52, LIN54, MYBL1, MYBL2, RBL1, RBL2, RBBP4, TFDP1 and TFDP2. The complex exists in quiescent cells where it represses cell cycle-dependent genes. It dissociates in S phase when LIN9, LIN37, LIN52 and LIN54 form a subcomplex that binds to MYBL2. Interacts with USP4. Part of the peroxisome proliferator activated receptor alpha (PPAR-alpha) interacting complex (PRIC). Interacts with RINT1. Interacts with PML. Interacts with RBBP9. Interacts with CD53. In terms of processing, during G0 and early G1 phase of the cell cycle, phosphorylated on Ser-636 and on 5 sites within the domain B. Phosphorylation on Ser-669 in G1 leads to its ubiquitin-dependent proteolysis.

It is found in the nucleus. Its function is as follows. Key regulator of entry into cell division. Directly involved in heterochromatin formation by maintaining overall chromatin structure and, in particular, that of constitutive heterochromatin by stabilizing histone methylation. Recruits and targets histone methyltransferases KMT5B and KMT5C, leading to epigenetic transcriptional repression. Controls histone H4 'Lys-20' trimethylation. Probably acts as a transcription repressor by recruiting chromatin-modifying enzymes to promoters. Potent inhibitor of E2F-mediated trans-activation, associates preferentially with E2F5. Binds to cyclins A and E. Binds to and may be involved in the transforming capacity of the adenovirus E1A protein. May act as a tumor suppressor. The chain is Retinoblastoma-like protein 2 (Rbl2) from Rattus norvegicus (Rat).